A 404-amino-acid chain; its full sequence is CCA-adding enzyme (404 aa).

Positions 27 and 30 each coordinate ATP. Residues Gly27 and Arg30 each coordinate CTP. Residues Asp40 and Asp42 each coordinate Mg(2+). 5 residues coordinate ATP: Arg111, Asp154, Arg157, Arg160, and Arg163. CTP contacts are provided by Arg111, Asp154, Arg157, Arg160, and Arg163.

This sequence belongs to the tRNA nucleotidyltransferase/poly(A) polymerase family. Bacterial CCA-adding enzyme type 3 subfamily. Homodimer. Requires Mg(2+) as cofactor.

The enzyme catalyses a tRNA precursor + 2 CTP + ATP = a tRNA with a 3' CCA end + 3 diphosphate. It carries out the reaction a tRNA with a 3' CCA end + 2 CTP + ATP = a tRNA with a 3' CCACCA end + 3 diphosphate. Catalyzes the addition and repair of the essential 3'-terminal CCA sequence in tRNAs without using a nucleic acid template. Adds these three nucleotides in the order of C, C, and A to the tRNA nucleotide-73, using CTP and ATP as substrates and producing inorganic pyrophosphate. tRNA 3'-terminal CCA addition is required both for tRNA processing and repair. Also involved in tRNA surveillance by mediating tandem CCA addition to generate a CCACCA at the 3' terminus of unstable tRNAs. While stable tRNAs receive only 3'-terminal CCA, unstable tRNAs are marked with CCACCA and rapidly degraded. The sequence is that of CCA-adding enzyme from Geobacillus sp. (strain WCH70).